A 105-amino-acid polypeptide reads, in one-letter code: Nucleoid-associated protein Lm4b_02677 (105 aa).

The span at 1 to 16 shows a compositional bias: low complexity; that stretch reads MRGMGNMQGMMKQMQK. The tract at residues 1 to 23 is disordered; that stretch reads MRGMGNMQGMMKQMQKMQKEMAK.

Belongs to the YbaB/EbfC family. As to quaternary structure, homodimer.

The protein localises to the cytoplasm. It localises to the nucleoid. Binds to DNA and alters its conformation. May be involved in regulation of gene expression, nucleoid organization and DNA protection. The chain is Nucleoid-associated protein Lm4b_02677 from Listeria monocytogenes serotype 4b (strain CLIP80459).